Reading from the N-terminus, the 35-residue chain is Photosystem II reaction center protein Y (35 aa).

The Lumenal segment spans residues 1-4 (MDTR). Residues 5–23 (LLIVLLPIIAAASWAIYNI) form a helical membrane-spanning segment. Topologically, residues 24-35 (GKILLLQLTKRS) are stromal.

This sequence belongs to the PsbY family. In terms of assembly, PSII is composed of 1 copy each of membrane proteins PsbA, PsbB, PsbC, PsbD, PsbE, PsbF, PsbH, PsbI, PsbJ, PsbK, PsbL, PsbM, PsbT, PsbX, PsbY, PsbZ, Psb30/Ycf12, at least 3 peripheral proteins of the oxygen-evolving complex and a large number of cofactors. It forms dimeric complexes.

The protein localises to the plastid. It localises to the chloroplast thylakoid membrane. In terms of biological role, loosely associated component of the core of photosystem II (PSII), it is not always seen in crystals. PSII is a light-driven water plastoquinone oxidoreductase, using light energy to abstract electrons from H(2)O, generating a proton gradient subsequently used for ATP formation. This chain is Photosystem II reaction center protein Y, found in Cyanidioschyzon merolae (strain NIES-3377 / 10D) (Unicellular red alga).